The sequence spans 1112 residues: Patronin (microtubule-binding protein) homolog (1112 aa).

The Calponin-homology (CH) domain maps to 165–286 (IDSVDALLFW…VNAFLADLFV (122 aa)). 4 disordered regions span residues 324 to 358 (AARSSMHNRNRPRMYNPPPAVSHSQGPSRSVSRMS), 485 to 504 (EGEDGTQSARLNRASSQPSV), 542 to 566 (MQQQMQQQQQQQAQAQSNYASPSQL), and 788 to 834 (NHSE…GSGE). Composition is skewed to polar residues over residues 345 to 358 (SHSQGPSRSVSRMS) and 489 to 504 (GTQSARLNRASSQPSV). Over residues 542–557 (MQQQMQQQQQQQAQAQ) the composition is skewed to low complexity. Positions 802 to 816 (QNDRDDLSTGRKSDD) are enriched in basic and acidic residues. A coiled-coil region spans residues 850–914 (ALIAKTMKRK…YKRKKLEKEL (65 aa)). The segment at 916 to 965 (AELSARSTGRGHSQPPFIRTKSQMSEVTESSRQNTPRMRGQSSVEQRVSV) is disordered. The span at 935-951 (TKSQMSEVTESSRQNTP) shows a compositional bias: polar residues. Over residues 956–965 (QSSVEQRVSV) the composition is skewed to low complexity. Residues 972-1109 (THKLYAKTVT…RIPHSGTPAH (138 aa)) form the CKK domain.

This sequence belongs to the CAMSAP1 family. As to quaternary structure, interacts with dapk-1. In terms of tissue distribution, expressed in larval and adult epidermis, intestine and pharynx. Broadly expressed in the nervous system. Expressed in body wall muscle cells.

The protein resides in the cell projection. It is found in the axon. It localises to the dendrite. Its subcellular location is the cell membrane. The protein localises to the sarcolemma. The protein resides in the cytoplasm. It is found in the cytosol. It localises to the cytoskeleton. Its subcellular location is the perikaryon. In terms of biological role, required for microtubule stability and anchorage by binding to the minus ends of microtubules. Acts redundantly with noca-1 to control circumferential microtubule assembly along the body which is necessary for larval development, viability, morphology and integrity of the epidermis. Promotes microtubule stability and polymerization in neurons. Involved in the maintenance of neurite morphology in ALM and PLM neurons. May play a role in synaptic protein localization in the PLM neuron. May act upstream of dlk-1 in neuronal regeneration. Plays a role in postembryonic epidermal tissue integrity and wound healing. The protein is Patronin (microtubule-binding protein) homolog of Caenorhabditis elegans.